We begin with the raw amino-acid sequence, 289 residues long: Inorganic pyrophosphatase (289 aa).

S2 is modified (N-acetylserine). K57 bears the N6-acetyllysine mark. Mg(2+) is bound by residues D116, D121, and D153. An N6-acetyllysine modification is found at K228. S250 carries the post-translational modification Phosphoserine.

It belongs to the PPase family. In terms of assembly, homodimer. Mg(2+) is required as a cofactor.

Its subcellular location is the cytoplasm. It carries out the reaction diphosphate + H2O = 2 phosphate + H(+). The sequence is that of Inorganic pyrophosphatase (Ppa1) from Mus musculus (Mouse).